The chain runs to 336 residues: NADH-quinone oxidoreductase subunit H (336 aa).

8 helical membrane-spanning segments follow: residues 4 to 24, 75 to 95, 108 to 128, 154 to 174, 181 to 201, 233 to 253, 272 to 292, and 308 to 328; these read YILW…LVVA, YLFF…WAVI, LGLL…VIAG, MGFA…TGII, IWHW…IAGI, LFFL…SIMF, FVPG…MFLW, and LGWK…ACMV.

The protein belongs to the complex I subunit 1 family. As to quaternary structure, NDH-1 is composed of 14 different subunits. Subunits NuoA, H, J, K, L, M, N constitute the membrane sector of the complex.

The protein localises to the cell inner membrane. The catalysed reaction is a quinone + NADH + 5 H(+)(in) = a quinol + NAD(+) + 4 H(+)(out). In terms of biological role, NDH-1 shuttles electrons from NADH, via FMN and iron-sulfur (Fe-S) centers, to quinones in the respiratory chain. The immediate electron acceptor for the enzyme in this species is believed to be ubiquinone. Couples the redox reaction to proton translocation (for every two electrons transferred, four hydrogen ions are translocated across the cytoplasmic membrane), and thus conserves the redox energy in a proton gradient. This subunit may bind ubiquinone. This Francisella tularensis subsp. tularensis (strain FSC 198) protein is NADH-quinone oxidoreductase subunit H.